A 249-amino-acid polypeptide reads, in one-letter code: Structural protein VP10 (249 aa).

Its subcellular location is the virion. Functionally, forms the virion spike 'foot' and helps anchor the VP9 spike 'head' protein in the virion. This chain is Structural protein VP10 (Segment-10), found in Banna virus (BAV).